Reading from the N-terminus, the 553-residue chain is Urocanate hydratase (553 aa).

NAD(+) contacts are provided by residues 45–46 (GG), Q123, 169–171 (GMG), D189, R194, 235–236 (NA), 256–260 (QTSAH), 266–267 (YV), Y315, and G485.

This sequence belongs to the urocanase family. NAD(+) serves as cofactor.

It localises to the cytoplasm. It catalyses the reaction 4-imidazolone-5-propanoate = trans-urocanate + H2O. It functions in the pathway amino-acid degradation; L-histidine degradation into L-glutamate; N-formimidoyl-L-glutamate from L-histidine: step 2/3. Its function is as follows. Catalyzes the conversion of urocanate to 4-imidazolone-5-propionate. The polypeptide is Urocanate hydratase (Staphylococcus saprophyticus subsp. saprophyticus (strain ATCC 15305 / DSM 20229 / NCIMB 8711 / NCTC 7292 / S-41)).